The chain runs to 544 residues: CTP synthase (544 aa).

The tract at residues M1–L267 is amidoligase domain. Position 13 (S13) interacts with CTP. Position 13 (S13) interacts with UTP. S14 to I19 contributes to the ATP binding site. Position 54 (Y54) interacts with L-glutamine. D71 is an ATP binding site. Mg(2+)-binding residues include D71 and E141. Residues D148–E150, K188–Q193, and K224 each bind CTP. Residues K188–Q193 and K224 each bind UTP. The Glutamine amidotransferase type-1 domain occupies E292 to Q534. G354 lines the L-glutamine pocket. The active-site Nucleophile; for glutamine hydrolysis is C381. L-glutamine-binding positions include L382–Q385, E405, and R462. Catalysis depends on residues H507 and E509.

Belongs to the CTP synthase family. Homotetramer.

It catalyses the reaction UTP + L-glutamine + ATP + H2O = CTP + L-glutamate + ADP + phosphate + 2 H(+). It carries out the reaction L-glutamine + H2O = L-glutamate + NH4(+). The enzyme catalyses UTP + NH4(+) + ATP = CTP + ADP + phosphate + 2 H(+). It participates in pyrimidine metabolism; CTP biosynthesis via de novo pathway; CTP from UDP: step 2/2. With respect to regulation, allosterically activated by GTP, when glutamine is the substrate; GTP has no effect on the reaction when ammonia is the substrate. The allosteric effector GTP functions by stabilizing the protein conformation that binds the tetrahedral intermediate(s) formed during glutamine hydrolysis. Inhibited by the product CTP, via allosteric rather than competitive inhibition. Its function is as follows. Catalyzes the ATP-dependent amination of UTP to CTP with either L-glutamine or ammonia as the source of nitrogen. Regulates intracellular CTP levels through interactions with the four ribonucleotide triphosphates. This Synechococcus sp. (strain JA-2-3B'a(2-13)) (Cyanobacteria bacterium Yellowstone B-Prime) protein is CTP synthase.